Here is a 519-residue protein sequence, read N- to C-terminus: SMR domain-containing protein At5g58720 (519 aa).

Basic residues predominate over residues 1-15 (MKQKNQHKKKKKRSC). Disordered regions lie at residues 1 to 47 (MKQK…REIE) and 92 to 128 (ESGDDPSTSSVASGSSGQETASTSEYGAGSSSSCSED). A compositionally biased stretch (basic and acidic residues) spans 28 to 47 (GNKKDVEEERKDGEGKREIE). Over residues 98-127 (STSSVASGSSGQETASTSEYGAGSSSSCSE) the composition is skewed to low complexity. Residues 428-502 (IDLHGQHVKP…NRGTLLIKLD (75 aa)) enclose the Smr domain.

As to quaternary structure, interacts with PRL1.

This Arabidopsis thaliana (Mouse-ear cress) protein is SMR domain-containing protein At5g58720.